We begin with the raw amino-acid sequence, 122 residues long: Acidic phospholipase A2 1 (122 aa).

Intrachain disulfides connect Cys-26–Cys-115, Cys-28–Cys-44, Cys-43–Cys-94, Cys-49–Cys-122, Cys-50–Cys-87, Cys-57–Cys-81, and Cys-75–Cys-85. Tyr-27, Gly-29, and Gly-31 together coordinate Ca(2+). The active site involves His-47. Ca(2+) is bound at residue Asp-48. Residue Asp-88 is part of the active site.

It belongs to the phospholipase A2 family. Group II subfamily. D49 sub-subfamily. Homodimer. Ca(2+) serves as cofactor. Expressed by the venom gland.

It localises to the secreted. It catalyses the reaction a 1,2-diacyl-sn-glycero-3-phosphocholine + H2O = a 1-acyl-sn-glycero-3-phosphocholine + a fatty acid + H(+). Its function is as follows. PLA2 catalyzes the calcium-dependent hydrolysis of the 2-acyl groups in 3-sn-phosphoglycerides. The polypeptide is Acidic phospholipase A2 1 (Protobothrops mucrosquamatus (Taiwan habu)).